Reading from the N-terminus, the 555-residue chain is MQPTSTTTKHIFVTGGVASSLGKGLTASSLGALLKARGLRVTMQKLDPYLNVDPGTMNPFQHGEVFVTNDGAETDLDIGHYERFLDVDLDGSANVTTGQVYSQVIAKERRGEYLGDTVQVIPHITNEIKHRIRRMAAEDVDVVITEVGGTVGDIESLPFLETVRQVRHEVGRDNVFVVHISLLPYIGPSGELKTKPTQHSVAALRNIGIQPDAIVLRADREVPTAIKRKISLMCDVDETAVVACPDARSIYDIPKVLHTEGLDAYVVRKLDLPFRDVDWTTWDDLLDRVHNPDHEVTVALVGKYIDLPDAYLSVTEAIRAGGFANKARVKVKWVTSDDCRTAAGAAEHLGDVDAICIPGGFGERGVDGKVGAIRYARENKVPLLGLCLGLQCIVIEAARSLAEIPDANSTEFDAATSHPVISTMEEQLAYVEGAGDLGGTMRLGLYPAKLAEGSLVREAYDGQPYVEERHRHRYEVNNAYRSELEKKAGLVFSGTSPDNKLVEYVEYPRETHPYLVATQAHPELRSRPTRPHPLFAGLVKAAVARQVAAAKGADA.

Residues 1 to 272 are amidoligase domain; the sequence is MQPTSTTTKH…DAYVVRKLDL (272 aa). Ser19 is a CTP binding site. Position 19 (Ser19) interacts with UTP. ATP contacts are provided by residues 20 to 25 and Asp77; that span reads SLGKGL. Mg(2+) contacts are provided by Asp77 and Glu146. CTP-binding positions include 153–155, 193–198, and Lys229; these read DIE and KTKPTQ. UTP is bound by residues 193–198 and Lys229; that span reads KTKPTQ. One can recognise a Glutamine amidotransferase type-1 domain in the interval 297 to 548; the sequence is TVALVGKYID…VKAAVARQVA (252 aa). Residue Gly360 participates in L-glutamine binding. Cys387 functions as the Nucleophile; for glutamine hydrolysis in the catalytic mechanism. L-glutamine-binding positions include 388-391, Glu411, and Arg473; that span reads LGLQ. Active-site residues include His521 and Glu523.

It belongs to the CTP synthase family. In terms of assembly, homotetramer.

The catalysed reaction is UTP + L-glutamine + ATP + H2O = CTP + L-glutamate + ADP + phosphate + 2 H(+). It carries out the reaction L-glutamine + H2O = L-glutamate + NH4(+). The enzyme catalyses UTP + NH4(+) + ATP = CTP + ADP + phosphate + 2 H(+). The protein operates within pyrimidine metabolism; CTP biosynthesis via de novo pathway; CTP from UDP: step 2/2. Its activity is regulated as follows. Allosterically activated by GTP, when glutamine is the substrate; GTP has no effect on the reaction when ammonia is the substrate. The allosteric effector GTP functions by stabilizing the protein conformation that binds the tetrahedral intermediate(s) formed during glutamine hydrolysis. Inhibited by the product CTP, via allosteric rather than competitive inhibition. Its function is as follows. Catalyzes the ATP-dependent amination of UTP to CTP with either L-glutamine or ammonia as the source of nitrogen. Regulates intracellular CTP levels through interactions with the four ribonucleotide triphosphates. This is CTP synthase from Streptomyces griseus subsp. griseus (strain JCM 4626 / CBS 651.72 / NBRC 13350 / KCC S-0626 / ISP 5235).